Here is a 115-residue protein sequence, read N- to C-terminus: Large ribosomal subunit protein bL20 (115 aa).

Belongs to the bacterial ribosomal protein bL20 family.

Functionally, binds directly to 23S ribosomal RNA and is necessary for the in vitro assembly process of the 50S ribosomal subunit. It is not involved in the protein synthesizing functions of that subunit. This is Large ribosomal subunit protein bL20 (rplT) from Borreliella burgdorferi (strain ATCC 35210 / DSM 4680 / CIP 102532 / B31) (Borrelia burgdorferi).